The primary structure comprises 71 residues: Small ribosomal subunit protein bS21 (71 aa).

This sequence belongs to the bacterial ribosomal protein bS21 family.

In Baumannia cicadellinicola subsp. Homalodisca coagulata, this protein is Small ribosomal subunit protein bS21.